The chain runs to 85 residues: MIVGVAYAKPTVQVWKHVDVPEGTSAREAIERSGLLAQFPEIDLEVNKVGIFGAICPLDRTLAEGDRVEIYRPIHPEAELLEKKR.

This sequence belongs to the UPF0125 (RnfH) family.

The protein is Protein RnfH of Cereibacter sphaeroides (strain ATCC 17029 / ATH 2.4.9) (Rhodobacter sphaeroides).